The primary structure comprises 287 residues: Nucleotide-binding protein Dtpsy_0831 (287 aa).

10–17 (GMSGSGKS) provides a ligand contact to ATP. 59 to 62 (DVRS) lines the GTP pocket.

Belongs to the RapZ-like family.

Displays ATPase and GTPase activities. The sequence is that of Nucleotide-binding protein Dtpsy_0831 from Acidovorax ebreus (strain TPSY) (Diaphorobacter sp. (strain TPSY)).